The chain runs to 1018 residues: Pleckstrin homology domain-containing family M member 2 (1018 aa).

M1 carries the N-acetylmethionine modification. The segment at 1–289 (MEPREVKDRI…PDQPDACTEL (289 aa)) is interaction with KIF5B. The RUN domain maps to 36–158 (RNHDKVLQRL…IRFDLDLDAP (123 aa)). Disordered stretches follow at residues 210-367 (SAIA…SSEL), 407-440 (TWCS…SEGL), 452-520 (ESPS…DSQL), 526-545 (EPLV…EPGT), and 555-583 (DQPS…THPS). The span at 230–245 (STASDLTSSKTSTKSP) shows a compositional bias: low complexity. Residues 258 to 270 (ETASSDTTPVHTT) show a composition bias toward polar residues. Over residues 294–306 (VTKKKKIGKKKKT) the composition is skewed to basic residues. Composition is skewed to polar residues over residues 316 to 325 (HPTSSQQKCG) and 347 to 367 (VLAS…SSEL). S423 is modified (phosphoserine). The 103-residue stretch at 770–872 (TITKEGMLHY…WMQHLCQAVS (103 aa)) folds into the PH domain.

As to quaternary structure, interacts with KLC2 (via TPR repeats). Interacts with KIF5B. Interacts with BORCS5. Interacts (via RUN domain) with ARL8B (GTP-bound form); PLEKHM1 and PLEKHM2 compete for interaction with ARL8B. Interacts with ARL8A.

The protein resides in the cytoplasm. Its subcellular location is the lysosome membrane. In terms of biological role, plays a role in lysosomes movement and localization at the cell periphery acting as an effector of ARL8B. Required for ARL8B to exert its effects on lysosome location, recruits kinesin-1 to lysosomes and hence direct their movement toward microtubule plus ends. Binding to ARL8B provides a link from lysosomal membranes to plus-end-directed motility. Critical factor involved in NK cell-mediated cytotoxicity. Drives the polarization of cytolytic granules and microtubule-organizing centers (MTOCs) toward the immune synapse between effector NK lymphocytes and target cells. Required for maintenance of the Golgi apparatus organization. May play a role in membrane tubulation. This is Pleckstrin homology domain-containing family M member 2 from Mus musculus (Mouse).